The chain runs to 329 residues: Ankyrin repeat and SOCS box protein 5 (329 aa).

6 ANK repeats span residues 69-98 (ADRSPLHEAASQGRLLALRTLLSQGYNVNA), 102-131 (DHVTPLHEACLGDHVACARTLLEAGANANA), 135-164 (DGVTPLFNACSQGSASCAELLLEYGAKAQL), 167-196 (CFPSPTHEAASKGHHECLDILIAWGIDVDQ), 200-229 (HLGTPLYVACMSQQFHCIWKLLYAGADVHK), and 232-261 (YWDTPLHAAAQQPSTEIVNLLLEFGADINA). The region spanning 278–329 (AVERILLQHEATPSSLCQLCRLCIRNYIGRQRFHLIPQLQLPTLLQNFLQYR) is the SOCS box domain.

Belongs to the ankyrin SOCS box (ASB) family.

It functions in the pathway protein modification; protein ubiquitination. In terms of biological role, may be a substrate-recognition component of a SCF-like ECS (Elongin-Cullin-SOCS-box protein) E3 ubiquitin-protein ligase complex which mediates the ubiquitination and subsequent proteasomal degradation of target proteins. May play a role in the initiation of arteriogenesis. The chain is Ankyrin repeat and SOCS box protein 5 (Asb5) from Mus musculus (Mouse).